The following is a 169-amino-acid chain: Peptide methionine sulfoxide reductase MsrA (169 aa).

Cysteine 10 is a catalytic residue.

The protein belongs to the MsrA Met sulfoxide reductase family.

It carries out the reaction L-methionyl-[protein] + [thioredoxin]-disulfide + H2O = L-methionyl-(S)-S-oxide-[protein] + [thioredoxin]-dithiol. The catalysed reaction is [thioredoxin]-disulfide + L-methionine + H2O = L-methionine (S)-S-oxide + [thioredoxin]-dithiol. Its function is as follows. Has an important function as a repair enzyme for proteins that have been inactivated by oxidation. Catalyzes the reversible oxidation-reduction of methionine sulfoxide in proteins to methionine. In Streptococcus equi subsp. zooepidemicus (strain H70), this protein is Peptide methionine sulfoxide reductase MsrA.